The following is a 149-amino-acid chain: Nucleoside diphosphate kinase (149 aa).

Residues lysine 11, phenylalanine 59, arginine 87, threonine 93, arginine 104, and asparagine 114 each coordinate ATP. The Pros-phosphohistidine intermediate role is filled by histidine 117.

It belongs to the NDK family. In terms of assembly, homotetramer. Requires Mg(2+) as cofactor.

It localises to the cytoplasm. It catalyses the reaction a 2'-deoxyribonucleoside 5'-diphosphate + ATP = a 2'-deoxyribonucleoside 5'-triphosphate + ADP. The catalysed reaction is a ribonucleoside 5'-diphosphate + ATP = a ribonucleoside 5'-triphosphate + ADP. Major role in the synthesis of nucleoside triphosphates other than ATP. The ATP gamma phosphate is transferred to the NDP beta phosphate via a ping-pong mechanism, using a phosphorylated active-site intermediate. The chain is Nucleoside diphosphate kinase from Treponema pallidum (strain Nichols).